Consider the following 82-residue polypeptide: Quinohemoprotein amine dehydrogenase subunit gamma (82 aa).

The segment at residues 7-16 is a cross-link (4-cysteinyl-glutamic acid (Cys-Glu)); it reads CTTSFDPGWE. Cross-links (3-cysteinyl-aspartic acid (Cys-Asp)) lie at residues 27 to 33 and 41 to 49; these read CQPMEAD and CWWPAQVAD. The active-site Proton acceptor is the aspartate 33. Positions 37-43 form a cross-link, 4'-cysteinyl-tryptophylquinone (Cys-Trp); sequence CADPCWW. Tryptophan 43 is subject to Tryptophylquinone.

It belongs to the quinohemoprotein amine dehydrogenase subunit gamma family. As to quaternary structure, heterotrimer of an alpha, a beta and a gamma subunit. It depends on cysteine tryptophylquinone residue as a cofactor. Post-translationally, the cysteine tryptophylquinone (CTQ) is generated by oxidation of the indole ring of a tryptophan residue to form tryptophylquinone, followed by covalent cross-linking with a cysteine residue.

Its subcellular location is the periplasm. It catalyses the reaction 2 Fe(III)-[cytochrome c550] + an aliphatic amine + H2O = 2 Fe(II)-[cytochrome c550] + an aldehyde + NH4(+) + 2 H(+). With respect to regulation, inhibited by carbonyl reagents such as hydrazine, hydroxylamine, phenylhydrazine and semicarbazide. Its function is as follows. Catalyzes the oxidative deamination of a wide range of primary aliphatic and aromatic amines. The physiological electron acceptor is the constitutive cytochrome c550. In Paracoccus denitrificans, this protein is Quinohemoprotein amine dehydrogenase subunit gamma (qhnDH).